The following is a 288-amino-acid chain: Hemin import ATP-binding protein HmuV (288 aa).

In terms of domain architecture, ABC transporter spans 31–269 (LRARGLVVER…DLLTRVYQHP (239 aa)). 68–75 (GPNGAGKS) serves as a coordination point for ATP.

Belongs to the ABC transporter superfamily. Heme (hemin) importer (TC 3.A.1.14.5) family. The complex is composed of two ATP-binding proteins (HmuV), two transmembrane proteins (HmuU) and a solute-binding protein (HmuT).

It is found in the cell membrane. Its function is as follows. Part of the ABC transporter complex HmuTUV involved in hemin import. Responsible for energy coupling to the transport system. This Nocardia farcinica (strain IFM 10152) protein is Hemin import ATP-binding protein HmuV.